We begin with the raw amino-acid sequence, 207 residues long: ATP-dependent Clp protease proteolytic subunit (207 aa).

Catalysis depends on serine 111, which acts as the Nucleophile. The active site involves histidine 136.

Belongs to the peptidase S14 family. As to quaternary structure, fourteen ClpP subunits assemble into 2 heptameric rings which stack back to back to give a disk-like structure with a central cavity, resembling the structure of eukaryotic proteasomes.

It localises to the cytoplasm. It carries out the reaction Hydrolysis of proteins to small peptides in the presence of ATP and magnesium. alpha-casein is the usual test substrate. In the absence of ATP, only oligopeptides shorter than five residues are hydrolyzed (such as succinyl-Leu-Tyr-|-NHMec, and Leu-Tyr-Leu-|-Tyr-Trp, in which cleavage of the -Tyr-|-Leu- and -Tyr-|-Trp bonds also occurs).. Its function is as follows. Cleaves peptides in various proteins in a process that requires ATP hydrolysis. Has a chymotrypsin-like activity. Plays a major role in the degradation of misfolded proteins. In Pectobacterium atrosepticum (strain SCRI 1043 / ATCC BAA-672) (Erwinia carotovora subsp. atroseptica), this protein is ATP-dependent Clp protease proteolytic subunit.